A 371-amino-acid polypeptide reads, in one-letter code: Diterpene cyclase DtcycA (371 aa).

The Mg(2+) site is built by Asn234, Ser238, and Glu242.

Belongs to the terpene synthase family. Homodimer. It depends on Mg(2+) as a cofactor.

The enzyme catalyses (2E,6E,10E)-geranylgeranyl diphosphate = cembrene C + diphosphate. The catalysed reaction is (2E,6E,10E)-geranylgeranyl diphosphate + H2O = (R)-nephthenol + diphosphate. In terms of biological role, diterpene cyclases that can form multiple diterpene products. The chain is Diterpene cyclase DtcycA from Streptomyces sp.